The sequence spans 1295 residues: Protein FORGETTER 1 (1295 aa).

3 stretches are compositionally biased toward pro residues: residues 1–14 (MTQS…PLPA), 75–89 (PQQP…PPPI), and 162–177 (PPTP…PPPE). Disordered regions lie at residues 1–20 (MTQS…HSAA), 68–107 (RPQF…PAHG), 153–204 (LTAS…MDYR), and 626–688 (PEQP…NDSD). Residues 178–193 (EVNEEAIEVEREEDEG) show a composition bias toward acidic residues. A Nuclear localization signal motif is present at residues 643–650 (RKRHSASP). The span at 669 to 688 (DNESDLESEADSADDSNDSD) shows a compositional bias: acidic residues. The PHD-type zinc-finger motif lies at 691–741 (FQICQICSGEDERKKLLHCSECDKLFHPDCVVPPVIDLPSEAWICFSCKEK).

It belongs to the SBNO family. In terms of assembly, interacts with SWI/SNF and ISWI chromatin remodelers such as BRM, CHR11 and CHR17. Binds to histone H3.

It is found in the nucleus. Required for normal embryo development. Necessary to acquire heat stress (HS) memory, by modulating nucleosome occupancy and regulating heat-induced gene expression. Associates globally with the nucleosome-poor regions flanking the transcription units of expressed genes. Binds to the promoter regions, primarily to the proximal promoter just upstream of the transcriptional start sites (TSS) and somewhat more weakly to the region downstream of the transcription termination site (TTS), of actively expressed genes (e.g. HSA32, HSP18.2 and HSP22.0) in a heat-dependent fashion. The chain is Protein FORGETTER 1 from Arabidopsis thaliana (Mouse-ear cress).